Consider the following 243-residue polypeptide: Type III pantothenate kinase (243 aa).

6-13 contacts ATP; the sequence is DIGNTNLK. 101-104 lines the substrate pocket; sequence GSDI. D103 acts as the Proton acceptor in catalysis. T125 is an ATP binding site. T176 is a substrate binding site.

It belongs to the type III pantothenate kinase family. In terms of assembly, homodimer. Requires NH4(+) as cofactor. The cofactor is K(+).

It is found in the cytoplasm. It carries out the reaction (R)-pantothenate + ATP = (R)-4'-phosphopantothenate + ADP + H(+). Its pathway is cofactor biosynthesis; coenzyme A biosynthesis; CoA from (R)-pantothenate: step 1/5. Catalyzes the phosphorylation of pantothenate (Pan), the first step in CoA biosynthesis. This chain is Type III pantothenate kinase, found in Mycoplasma mobile (strain ATCC 43663 / 163K / NCTC 11711) (Mesomycoplasma mobile).